A 745-amino-acid polypeptide reads, in one-letter code: MNNGIDPENETNKKGAIGKNPEEKITVEQTNTKNNLQEHGKMENMDQHHTHGHMERHQQMDHGHMSGMDHSHMDHEDMSGMNHSHMGHENMSGMDHSMHMGNFKQKFWLSLILAIPIILFSPMMGMSFPFQVTFPGSNWVVLVLATILFIYGGQPFLSGAKMELKQKSPAMMTLIAMGITVAYVYSVYSFIANLINPHTHVMDFFWELATLIVIMLLGHWIEMNAVSNASDALQKLAELLPESVKRLKKDGTEETVSLKEVHEGDRLIVRAGDKMPTDGTIDKGHTIVDESAVTGESKGVKKQVGDSVIGGSINGDGTIEITVTGTGENGYLAKVMEMVRKAQGEKSKLEFLSDKVAKWLFYVALVVGIIAFIAWLFLANLPDALERMVTVFIIACPHALGLAIPLVVARSTSIAAKNGLLLKNRNAMEQANDLDVIMLDKTGTLTQGKFTVTGIEILDEAYQEEEILKYIGALEAHANHPLAIGIMNYLKEKKITPYQAQEQKNLAGVGLEATVEDKDVKIINEKEAKRLGLKIDPERLKNYEAQGNTVSFLVVSDKLVAVIALGDVIKPEAKEFIQAIKEKNIIPVMLTGDNPKAAQAVAEYLGINEYYGGLLPDDKEAIVQRYLDQGKKVIMVGDGINDAPSLARATIGMAIGAGTDIAIDSADVVLTNSDPKDILHFLELAKETRRKMIQNLWWGAGYNIIAIPLAAGILAPIGLILSPAVGAVLMSLSTVVVALNALTLK.

The tract at residues 1 to 76 (MNNGIDPENE…GMDHSHMDHE (76 aa)) is disordered. Residues 1 to 108 (MNNGIDPENE…HMGNFKQKFW (108 aa)) lie on the Cytoplasmic side of the membrane. A compositionally biased stretch (basic and acidic residues) spans 36–76 (LQEHGKMENMDQHHTHGHMERHQQMDHGHMSGMDHSHMDHE). 3 repeat units span residues 60–71 (MDHGHMSGMDHS), 73–84 (MDHEDMSGMNHS), and 86–97 (MGHENMSGMDHS). Positions 60–97 (MDHGHMSGMDHSHMDHEDMSGMNHSHMGHENMSGMDHS) are 3 X 12 AA approximate repeats. The chain crosses the membrane as a helical span at residues 109–128 (LSLILAIPIILFSPMMGMSF). At 129–139 (PFQVTFPGSNW) the chain is on the extracellular side. A helical membrane pass occupies residues 140–160 (VVLVLATILFIYGGQPFLSGA). Over 161–170 (KMELKQKSPA) the chain is Cytoplasmic. Residues 171–191 (MMTLIAMGITVAYVYSVYSFI) form a helical membrane-spanning segment. Residues 192-200 (ANLINPHTH) lie on the Extracellular side of the membrane. The helical transmembrane segment at 201-217 (VMDFFWELATLIVIMLL) threads the bilayer. Topologically, residues 218–359 (GHWIEMNAVS…EFLSDKVAKW (142 aa)) are cytoplasmic. The helical transmembrane segment at 360–379 (LFYVALVVGIIAFIAWLFLA) threads the bilayer. Residues 380 to 388 (NLPDALERM) are Extracellular-facing. The helical transmembrane segment at 389 to 409 (VTVFIIACPHALGLAIPLVVA) threads the bilayer. Over 410 to 703 (RSTSIAAKNG…QNLWWGAGYN (294 aa)) the chain is Cytoplasmic. Catalysis depends on D440, which acts as the 4-aspartylphosphate intermediate. Mg(2+) is bound by residues D638 and D642. The helical transmembrane segment at 704–721 (IIAIPLAAGILAPIGLIL) threads the bilayer. The Extracellular portion of the chain corresponds to 722–723 (SP). The helical transmembrane segment at 724-744 (AVGAVLMSLSTVVVALNALTL) threads the bilayer. Residue K745 is a topological domain, cytoplasmic.

The protein belongs to the cation transport ATPase (P-type) (TC 3.A.3) family. Type IB subfamily. Monomer.

It localises to the cell membrane. It catalyses the reaction Cu(+)(in) + ATP + H2O = Cu(+)(out) + ADP + phosphate + H(+). Its activity is regulated as follows. Inhibited by vanadate. Functionally, involved in copper export. Can also export silver. This Enterococcus hirae (strain ATCC 9790 / DSM 20160 / JCM 8729 / LMG 6399 / NBRC 3181 / NCIMB 6459 / NCDO 1258 / NCTC 12367 / WDCM 00089 / R) protein is Copper-exporting P-type ATPase B (copB).